The following is a 124-amino-acid chain: Small ribosomal subunit protein uS13 (124 aa).

A disordered region spans residues 97–124; that stretch reads PVRGQRTKTNARTRKGPKRTIAGKKKAR.

The protein belongs to the universal ribosomal protein uS13 family. Part of the 30S ribosomal subunit. Forms a loose heterodimer with protein S19. Forms two bridges to the 50S subunit in the 70S ribosome.

Its function is as follows. Located at the top of the head of the 30S subunit, it contacts several helices of the 16S rRNA. In the 70S ribosome it contacts the 23S rRNA (bridge B1a) and protein L5 of the 50S subunit (bridge B1b), connecting the 2 subunits; these bridges are implicated in subunit movement. Contacts the tRNAs in the A and P-sites. The sequence is that of Small ribosomal subunit protein uS13 from Mycolicibacterium gilvum (strain PYR-GCK) (Mycobacterium gilvum (strain PYR-GCK)).